A 614-amino-acid chain; its full sequence is Pyrophosphate--fructose 6-phosphate 1-phosphotransferase subunit alpha 1 (614 aa).

This sequence belongs to the phosphofructokinase type A (PFKA) family. PPi-dependent PFK group II subfamily. Clade 'Long' sub-subfamily. Tetramer of two alpha (regulatory) and two beta (catalytic) chains. As to expression, expressed in leaves, roots, and flowers (e.g. sepals, petals, stamen and gynoecium).

It is found in the cytoplasm. The protein operates within carbohydrate degradation; glycolysis; D-glyceraldehyde 3-phosphate and glycerone phosphate from D-glucose: step 3/4. Its activity is regulated as follows. Allosterically activated by fructose 2,6-bisphosphate. Its function is as follows. Regulatory subunit of pyrophosphate--fructose 6-phosphate 1-phosphotransferase. This chain is Pyrophosphate--fructose 6-phosphate 1-phosphotransferase subunit alpha 1, found in Arabidopsis thaliana (Mouse-ear cress).